The chain runs to 371 residues: 4-hydroxyphenylpyruvate dioxygenase-like protein (371 aa).

2 consecutive VOC domains span residues 7–135 (RLCH…LLER) and 160–328 (RVDH…VFTK). Histidine 163, histidine 258, and glutamate 339 together coordinate Fe cation.

Belongs to the 4HPPD family. Requires Fe cation as cofactor.

It localises to the mitochondrion. The enzyme catalyses 3-(4-hydroxyphenyl)pyruvate + O2 = (S)-4-hydroxymandelate + CO2. In terms of biological role, iron-dependent dioxygenase that catalyzes the conversion of 4-hydroxyphenylpyruvate (4-HPPA) to 4-hydroxymandelate (4-HMA) in the mitochondria, one of the steps in the biosynthesis of coenzyme Q10 from tyrosine. In Homo sapiens (Human), this protein is 4-hydroxyphenylpyruvate dioxygenase-like protein.